The primary structure comprises 957 residues: ERC protein 2 (957 aa).

A compositionally biased stretch (polar residues) spans 1 to 13 (MYGSARTISNPEG). The disordered stretch occupies residues 1-44 (MYGSARTISNPEGSPSRSPRLPRSPRLGHRRTSSGGGGGTGKTL). The segment covering 14–25 (SPSRSPRLPRSP) has biased composition (low complexity). Residues Ser-65 and Ser-666 each carry the phosphoserine modification. Residues 140-917 (RQVRDSTMLD…RMKLMADNYD (778 aa)) are a coiled coil. Positions 760–957 (DQNKKVANLK…DQDDEEGIWA (198 aa)) are involved in binding to RIMS1. Positions 918–957 (DDHHHYHHHHHHHHHRSPGRSQHSNHRPSPDQDDEEGIWA) are disordered. A compositionally biased stretch (basic residues) spans 922–943 (HYHHHHHHHHHRSPGRSQHSNH). Positions 948-957 (DQDDEEGIWA) are enriched in acidic residues.

In terms of assembly, interacts with BSN, ERC1, PPFIA1, PPFIA2, PPFIA3 and PPFIA4. Interacts through its C-terminus with the PDZ domain of RIMS1. Part of a complex consisting of ERC2, RIMS1 and UNC13A. In terms of tissue distribution, predominantly expressed in brain, including hippocampus, cortex, cerebellum, amygdala and olfactory bulb.

The protein resides in the cytoplasm. The protein localises to the synapse. It is found in the presynaptic active zone. Its subcellular location is the cytoskeleton. Its function is as follows. Thought to be involved in the organization of the cytomatrix at the nerve terminals active zone (CAZ) which regulates neurotransmitter release. Seems to act together with BSN. May recruit liprin-alpha proteins to the CAZ. This Rattus norvegicus (Rat) protein is ERC protein 2 (Erc2).